The primary structure comprises 279 residues: Putative pyruvate, phosphate dikinase regulatory protein (279 aa).

ADP is bound at residue 153 to 160 (GVSRTSKT).

This sequence belongs to the pyruvate, phosphate/water dikinase regulatory protein family. PDRP subfamily.

It catalyses the reaction N(tele)-phospho-L-histidyl/L-threonyl-[pyruvate, phosphate dikinase] + ADP = N(tele)-phospho-L-histidyl/O-phospho-L-threonyl-[pyruvate, phosphate dikinase] + AMP + H(+). The catalysed reaction is N(tele)-phospho-L-histidyl/O-phospho-L-threonyl-[pyruvate, phosphate dikinase] + phosphate + H(+) = N(tele)-phospho-L-histidyl/L-threonyl-[pyruvate, phosphate dikinase] + diphosphate. Functionally, bifunctional serine/threonine kinase and phosphorylase involved in the regulation of the pyruvate, phosphate dikinase (PPDK) by catalyzing its phosphorylation/dephosphorylation. The polypeptide is Putative pyruvate, phosphate dikinase regulatory protein (Bradyrhizobium diazoefficiens (strain JCM 10833 / BCRC 13528 / IAM 13628 / NBRC 14792 / USDA 110)).